The primary structure comprises 406 residues: Putative nickel insertion protein (406 aa).

The protein belongs to the LarC family.

This Methanosphaera stadtmanae (strain ATCC 43021 / DSM 3091 / JCM 11832 / MCB-3) protein is Putative nickel insertion protein.